A 255-amino-acid polypeptide reads, in one-letter code: 5-oxoprolinase subunit A (255 aa).

This sequence belongs to the LamB/PxpA family. As to quaternary structure, forms a complex composed of PxpA, PxpB and PxpC.

It carries out the reaction 5-oxo-L-proline + ATP + 2 H2O = L-glutamate + ADP + phosphate + H(+). Functionally, catalyzes the cleavage of 5-oxoproline to form L-glutamate coupled to the hydrolysis of ATP to ADP and inorganic phosphate. This chain is 5-oxoprolinase subunit A, found in Clostridium beijerinckii (strain ATCC 51743 / NCIMB 8052) (Clostridium acetobutylicum).